We begin with the raw amino-acid sequence, 410 residues long: Arginine deiminase (410 aa).

Cys-399 acts as the Amidino-cysteine intermediate in catalysis.

Belongs to the arginine deiminase family.

Its subcellular location is the cytoplasm. The catalysed reaction is L-arginine + H2O = L-citrulline + NH4(+). It participates in amino-acid degradation; L-arginine degradation via ADI pathway; carbamoyl phosphate from L-arginine: step 1/2. The protein is Arginine deiminase of Listeria monocytogenes serovar 1/2a (strain ATCC BAA-679 / EGD-e).